Reading from the N-terminus, the 29-residue chain is Kunitz-type trypsin inhibitor IVTI (29 aa).

It belongs to the protease inhibitor I3 (leguminous Kunitz-type inhibitor) family. In terms of assembly, monomer and dimer.

Functionally, inhibits bovine trypsin but not chymotrypsin. Also inhibits trypsin-like enzymes from midgut of several lepidopteran species and inhibits larval development in those species. Has fungicidal activity against yeast C.buinensis. Has a bacteriostatic effect against E.coli. Is not cytotoxic. The chain is Kunitz-type trypsin inhibitor IVTI from Inga vera (River koko).